Here is a 388-residue protein sequence, read N- to C-terminus: Ferrochelatase (388 aa).

The Fe cation site is built by His196 and Glu277.

It belongs to the ferrochelatase family.

The protein resides in the cytoplasm. It carries out the reaction heme b + 2 H(+) = protoporphyrin IX + Fe(2+). It participates in porphyrin-containing compound metabolism; protoheme biosynthesis; protoheme from protoporphyrin-IX: step 1/1. Its function is as follows. Catalyzes the ferrous insertion into protoporphyrin IX. This Nostoc sp. (strain PCC 7120 / SAG 25.82 / UTEX 2576) protein is Ferrochelatase.